The chain runs to 348 residues: GTPase Obg (348 aa).

An Obg domain is found at 1–160 (MHFLDQAKIF…MWVWLRLKLL (160 aa)). The segment at 120-145 (RGGDGGRGNASYKTSTNRAPRQHGPG) is disordered. Positions 161–328 (ADAGLVGLPN…VLDKLLEAIG (168 aa)) constitute an OBG-type G domain. Residues 167 to 174 (GLPNAGKS), 192 to 196 (FTTLR), 213 to 216 (DIPG), 280 to 283 (NKID), and 309 to 311 (SGA) contribute to the GTP site. Positions 174 and 194 each coordinate Mg(2+). The interval 326–348 (AIGQPEPGPDADEEEKGGDWSPI) is disordered.

Belongs to the TRAFAC class OBG-HflX-like GTPase superfamily. OBG GTPase family. In terms of assembly, monomer. It depends on Mg(2+) as a cofactor.

It is found in the cytoplasm. Its function is as follows. An essential GTPase which binds GTP, GDP and possibly (p)ppGpp with moderate affinity, with high nucleotide exchange rates and a fairly low GTP hydrolysis rate. Plays a role in control of the cell cycle, stress response, ribosome biogenesis and in those bacteria that undergo differentiation, in morphogenesis control. The sequence is that of GTPase Obg from Sphingopyxis alaskensis (strain DSM 13593 / LMG 18877 / RB2256) (Sphingomonas alaskensis).